Consider the following 159-residue polypeptide: 17 kDa surface antigen (159 aa).

A signal peptide spans 1 to 19; it reads MKLLSKIMIIALAASMLQA. Residue C20 is the site of N-palmitoyl cysteine attachment. C20 carries S-diacylglycerol cysteine lipidation.

Belongs to the rickettsiale 17 kDa surface antigen family.

The protein localises to the cell outer membrane. The polypeptide is 17 kDa surface antigen (omp) (Rickettsia prowazekii (strain Madrid E)).